The chain runs to 210 residues: Large ribosomal subunit protein uL15 (210 aa).

Disordered stretches follow at residues 1 to 64 (MADD…AAPR) and 76 to 104 (AAGA…TKGT). Over residues 9–54 (EAAAKPVAEKATATALAKKAPAKAAAADKAAPAAKGETVAAKPAKA) the composition is skewed to low complexity. Residues 79–93 (AKKEKTRVGRGEGSK) show a composition bias toward basic and acidic residues.

It belongs to the universal ribosomal protein uL15 family. As to quaternary structure, part of the 50S ribosomal subunit.

Functionally, binds to the 23S rRNA. This Leifsonia xyli subsp. xyli (strain CTCB07) protein is Large ribosomal subunit protein uL15.